A 138-amino-acid polypeptide reads, in one-letter code: Transcriptional activator protein Pur-alpha (138 aa).

Serine 70 bears the Phosphoserine mark.

The protein belongs to the PUR DNA-binding protein family. Homodimer, heterodimer with PURB and heterotrimer with PURB and YBX1/Y-box protein 1. Interacts with FMR1; this interaction occurs in association with polyribosome.

Its subcellular location is the nucleus. In terms of biological role, this is a probable transcription activator that specifically binds the purine-rich single strand of the PUR element located upstream of the c-Myc gene. May play a role in the initiation of DNA replication and in recombination. This is Transcriptional activator protein Pur-alpha from Rattus norvegicus (Rat).